The primary structure comprises 823 residues: DNA topoisomerase 4 subunit A (823 aa).

The Topo IIA-type catalytic domain occupies L30–L496. Y118 acts as the O-(5'-phospho-DNA)-tyrosine intermediate in catalysis.

It belongs to the type II topoisomerase GyrA/ParC subunit family. ParC type 2 subfamily. In terms of assembly, heterotetramer composed of ParC and ParE.

The protein resides in the cell membrane. The enzyme catalyses ATP-dependent breakage, passage and rejoining of double-stranded DNA.. With respect to regulation, inhibited by quinolones, such as levofloxacin. In terms of biological role, topoisomerase IV is essential for chromosome segregation. It relaxes supercoiled DNA. Performs the decatenation events required during the replication of a circular DNA molecule. The protein is DNA topoisomerase 4 subunit A of Streptococcus pneumoniae serotype 4 (strain ATCC BAA-334 / TIGR4).